A 118-amino-acid polypeptide reads, in one-letter code: UPF0342 protein BT9727_0768 (118 aa).

Belongs to the UPF0342 family.

The chain is UPF0342 protein BT9727_0768 from Bacillus thuringiensis subsp. konkukian (strain 97-27).